Here is a 229-residue protein sequence, read N- to C-terminus: MLSTSLPVCFLVIGAALCAPERMQNDPDPHDSTAQGSDNHSDHIAPLAKRSPHYDFGLGKRAYSYVSEYKRLPVYNFGLGKRSRPYSFGLGKRSVDEDQTNDDQQQIMNNDLDQAALAEFFDQYDDAGYEKRARPYSFGLGKRFADDDTSEEKRARAYDFGLGKRLPLYNFGLGKRARSYNFGLGKRLASKFNFGLGKRERDMHRFSFGLGKRSADDASTEDSDNYFDV.

Residues 1-18 (MLSTSLPVCFLVIGAALC) form the signal peptide. Positions 19–48 (APERMQNDPDPHDSTAQGSDNHSDHIAPLA) are excised as a propeptide. Residues 23–46 (MQNDPDPHDSTAQGSDNHSDHIAP) form a disordered region. Leu58 carries the leucine amide modification. The propeptide occupies 62-80 (AYSYVSEYKRLPVYNFGLG). At Leu90 the chain carries Leucine amide. Positions 94–130 (SVDEDQTNDDQQQIMNNDLDQAALAEFFDQYDDAGYE) are excised as a propeptide. At Leu140 the chain carries Leucine amide. Positions 144 to 152 (FADDDTSEE) are excised as a propeptide. Leu162, Leu173, Leu184, Leu196, and Leu210 each carry leucine amide. A propeptide spanning residues 214–229 (SADDASTEDSDNYFDV) is cleaved from the precursor.

Belongs to the allatostatin family. As to expression, allatostatin-A-1: Expressed in antennal lobe (AL), corpora cardiaca (CC), corpora allata (CA) and gnathal ganglion (GNG) (at protein level). Expression in AL and GNG detected in most animals, in CC and CA in some animals (at protein level). Allatostatin-A-3: Expressed in antennal lobe (AL), corpora cardiaca (CC), corpora allata (CA) and gnathal ganglion (GNG) (at protein level). Expression in AL detected in all animals, in GNG, CC and CA in most animals (at protein level). Allatostatin-A-4: Expressed in antennal lobe (AL), corpora cardiaca (CC), corpora allata (CA) and gnathal ganglion (GNG) in all animals (at protein level). Allatostatin-A-5: Expressed in antennal lobe (AL), corpora cardiaca (CC), corpora allata (CA) and gnathal ganglion (GNG) in all animals (at protein level). Allatostatin-A-6: Expressed in antennal lobe (AL) and gnathal ganglion (GNG) (at protein level). Expression in AL detected in some animals, in GNG in few animals (at protein level). Not expressed in corpora cardiaca (CC) and corpora allata (CA) (at protein level). Allatostatin-A-7: Expressed in antennal lobe (AL), corpora cardiaca (CC), corpora allata (CA) and gnathal ganglion (GNG) (at protein level). Expression in AL detected in all animals, in GNG, CC and CA in most animals (at protein level). Allatostatin-A-8: Expressed in antennal lobe (AL), corpora cardiaca (CC), corpora allata (CA) and gnathal ganglion (GNG) (at protein level). Expression in AL detected in all animals, in GNG, CC and CA in most animals (at protein level). Allatostatin-A-9: Expressed in antennal lobe (AL), corpora cardiaca (CC), corpora allata (CA) and gnathal ganglion (GNG) (at protein level). Expression in AL detected in all animals, in GNG in most animals and in CC and CA in some animals (at protein level).

Its subcellular location is the secreted. In terms of biological role, neuropeptide inhibitors of juvenile hormone synthesis and gut muscle contraction. The chain is Allatostatin-A from Agrotis ipsilon (Black cutworm moth).